A 906-amino-acid polypeptide reads, in one-letter code: Probable helicase HelY (906 aa).

The 159-residue stretch at 26–184 folds into the Helicase ATP-binding domain; the sequence is CSALERGHGV…WIQTVRGDTT (159 aa). 39–46 is an ATP binding site; it reads APTGAGKT. The DEVH box motif lies at 132-135; sequence DEVH. Residues 259-463 form the Helicase C-terminal domain; it reads GRPEVIAKLD…SYNMTINLVH (205 aa).

The protein belongs to the helicase family. SKI2 subfamily.

This Mycobacterium tuberculosis (strain CDC 1551 / Oshkosh) protein is Probable helicase HelY (helY).